A 626-amino-acid chain; its full sequence is MSKQEKAISLSESAQVDQQSVQPLPNSRKVYVEGSRPDIRVPMREISLHDTPTDFGGEKNAPVLVYDTSGPYTDPNVVIDVRKGLGDVRSAWIDARGDTERLEGLSSNFGLQRLNDAELAKLRFAHVRNPRRAKAGANVSQMHYARQGIITAEMEYVAIRENMKLQEARAAGLLDQQHAGHSFGASIPKEITPEFVREEIARGRAIIPANINHTELEPMIIGRNFLVKINGNIGNSALGSSIEEEVAKLTWGIRWGSDTVMDLSTGKHIHETREWIIRNSPVPIGTVPIYQALEKVNGVAEDLTWELFRDTLIEQAEQGVDYFTIHAGVLLRYVPLTAKRVTGIVSRGGSIMAKWCLAHHKENFLYTHFDEICEIMKAYDVSFSLGDGLRPGSIADANDAAQFGELETLGELTKIAWKHDVQCMIEGPGHVPMQLIKENMDKQLECCDEAPFYTLGPLTTDIAPGYDHITSGIGAAMIGWFGCAMLCYVTPKEHLGLPNKDDVKTGIITYKIAAHAADLAKGHPGAQIRDNALSKARFEFRWEDQFNLGLDPDTARSFHDETLPKESAKVAHFCSMCGPKFCSMKITQEVREYAAKIETVDVTVEQGMREQSERFRQEGSQLYQKV.

Residues 1–27 (MSKQEKAISLSESAQVDQQSVQPLPNS) are disordered. Polar residues predominate over residues 10–25 (LSESAQVDQQSVQPLP). Residues Asn-232, Met-261, Tyr-290, His-326, 346-348 (SRG), 387-390 (DGLR), and Glu-426 each bind substrate. His-430 lines the Zn(2+) pocket. A substrate-binding site is contributed by Tyr-453. A Zn(2+)-binding site is contributed by His-494. [4Fe-4S] cluster-binding residues include Cys-574, Cys-577, and Cys-582.

This sequence belongs to the ThiC family. In terms of assembly, homodimer. The cofactor is [4Fe-4S] cluster.

It catalyses the reaction 5-amino-1-(5-phospho-beta-D-ribosyl)imidazole + S-adenosyl-L-methionine = 4-amino-2-methyl-5-(phosphooxymethyl)pyrimidine + CO + 5'-deoxyadenosine + formate + L-methionine + 3 H(+). The protein operates within cofactor biosynthesis; thiamine diphosphate biosynthesis. Its function is as follows. Catalyzes the synthesis of the hydroxymethylpyrimidine phosphate (HMP-P) moiety of thiamine from aminoimidazole ribotide (AIR) in a radical S-adenosyl-L-methionine (SAM)-dependent reaction. The sequence is that of Phosphomethylpyrimidine synthase from Pseudomonas entomophila (strain L48).